We begin with the raw amino-acid sequence, 463 residues long: ATP synthase subunit beta (463 aa).

ATP is bound at residue 151-158; it reads GGAGVGKT.

It belongs to the ATPase alpha/beta chains family. In terms of assembly, F-type ATPases have 2 components, CF(1) - the catalytic core - and CF(0) - the membrane proton channel. CF(1) has five subunits: alpha(3), beta(3), gamma(1), delta(1), epsilon(1). CF(0) has three main subunits: a(1), b(2) and c(9-12). The alpha and beta chains form an alternating ring which encloses part of the gamma chain. CF(1) is attached to CF(0) by a central stalk formed by the gamma and epsilon chains, while a peripheral stalk is formed by the delta and b chains.

It localises to the cell membrane. The enzyme catalyses ATP + H2O + 4 H(+)(in) = ADP + phosphate + 5 H(+)(out). Functionally, produces ATP from ADP in the presence of a proton gradient across the membrane. The catalytic sites are hosted primarily by the beta subunits. The chain is ATP synthase subunit beta from Clostridium botulinum (strain ATCC 19397 / Type A).